A 458-amino-acid polypeptide reads, in one-letter code: Plant UBX domain-containing protein 2 (458 aa).

Residues 1-103 are disordered; that stretch reads MDDVKDKLKG…APQDGFDPYG (103 aa). The span at 44–54 shows a compositional bias: polar residues; sequence PIQNRFNSSQA. A compositionally biased stretch (pro residues) spans 56–70; the sequence is NPTPRPKPNPNPLPE. The span at 74 to 85 shows a compositional bias: polar residues; the sequence is SSSDQKISGSTR. A C2H2-type; atypical zinc finger spans residues 121-143; sequence FECPICKNPFTSEEEVSVHVESC. Residues 181–248 form the PUB domain; sequence SSIDVLLRLF…EIWAVMDVPS (68 aa). Positions 349-433 constitute a UBX domain; sequence KRYKRSMIRV…ELVPSALIRF (85 aa).

In terms of assembly, interacts with CDC48A in vitro and co-fractionates with membrane-associated but not soluble CDC48A in vivo.

Its subcellular location is the membrane. In terms of biological role, facilitates the interaction of SYP31 and CDC48A, thereby regulating an CDC48A membrane-associated function. Appears to act as a negative regulator mediating the powdery mildew-plant interaction. This Arabidopsis thaliana (Mouse-ear cress) protein is Plant UBX domain-containing protein 2.